Reading from the N-terminus, the 162-residue chain is Phosphopantetheine adenylyltransferase (162 aa).

Ser9 serves as a coordination point for substrate. ATP contacts are provided by residues Ser9 to Phe10 and His17. Positions 41, 77, and 91 each coordinate substrate. ATP is bound by residues Gly92–Arg94, Glu102, and Tyr126–Ser132.

Belongs to the bacterial CoaD family. In terms of assembly, homohexamer. Requires Mg(2+) as cofactor.

The protein localises to the cytoplasm. It carries out the reaction (R)-4'-phosphopantetheine + ATP + H(+) = 3'-dephospho-CoA + diphosphate. It participates in cofactor biosynthesis; coenzyme A biosynthesis; CoA from (R)-pantothenate: step 4/5. Functionally, reversibly transfers an adenylyl group from ATP to 4'-phosphopantetheine, yielding dephospho-CoA (dPCoA) and pyrophosphate. The chain is Phosphopantetheine adenylyltransferase from Frankia alni (strain DSM 45986 / CECT 9034 / ACN14a).